Reading from the N-terminus, the 344-residue chain is UDP-3-O-acylglucosamine N-acyltransferase (344 aa).

His250 acts as the Proton acceptor in catalysis.

This sequence belongs to the transferase hexapeptide repeat family. LpxD subfamily. As to quaternary structure, homotrimer.

The enzyme catalyses a UDP-3-O-[(3R)-3-hydroxyacyl]-alpha-D-glucosamine + a (3R)-hydroxyacyl-[ACP] = a UDP-2-N,3-O-bis[(3R)-3-hydroxyacyl]-alpha-D-glucosamine + holo-[ACP] + H(+). Its pathway is bacterial outer membrane biogenesis; LPS lipid A biosynthesis. Functionally, catalyzes the N-acylation of UDP-3-O-acylglucosamine using 3-hydroxyacyl-ACP as the acyl donor. Is involved in the biosynthesis of lipid A, a phosphorylated glycolipid that anchors the lipopolysaccharide to the outer membrane of the cell. The sequence is that of UDP-3-O-acylglucosamine N-acyltransferase from Maricaulis maris (strain MCS10) (Caulobacter maris).